Reading from the N-terminus, the 444-residue chain is NAD(+)--protein-arginine ADP-ribosyltransferase Tre1 (444 aa).

Positions 72 to 140 (PRHVTGVLAD…NDLLACSAEI (69 aa)) are PAAR domain. One can recognise a TR mART core domain in the interval 266 to 444 (MTLAEAVGQE…TTHLLYREIP (179 aa)). The segment at 274–444 (QEQAKVWTQT…TTHLLYREIP (171 aa)) is ART domain. Catalysis depends on residues arginine 356, serine 381, and glutamate 415.

The protein belongs to the Arg-specific ADP-ribosyltransferase family. As to quaternary structure, forms a stable complex with cognate immunity protein Tri1-Sp.

The protein resides in the secreted. The protein localises to the host cytoplasm. It carries out the reaction L-arginyl-[protein] + NAD(+) = N(omega)-(ADP-D-ribosyl)-L-arginyl-[protein] + nicotinamide + H(+). Toxic component of a contact-dependent interbacterial competition system (also called effector-immunity systems). Acts by ADP-ribosylating a number of target proteins in target cells; E.coli target proteins include FtsZ, EFTu, RNase E, Fis, RL9, SucB, and LolD. FtsZ is thought to be the physiologically relevant target as it is ADP-ribosylated on a critical residue. ADP-ribosylation of FtsZ prevents formation of the FtsZ mid-cell ring and inhibits cell division. Overexpression of the whole Tre1 protein or the ART domain in E.coli is toxic; cells elongate dramatically and some undergo lysis. Toxic activity is neutralized by coexpression of the cognate immunity protein Tri1-Sp; Tri1-Sp neutralizes this protein both by binding to and occluding the active site (via Tri1's N-terminal extension) and by hydrolysis of the ADP-ribosyl moiety from the target protein. Tre1 can also be neutralized by non-cognate immunity protein Tri1-Pp from P.putida strain GB-1, with which it does not form a stable complex; DraG of R.palustris does not neutralize the toxic effects of this protein. In interbacterial competition studies Tri1 from P.putida strain B6-2 also neutralizes this protein. This chain is NAD(+)--protein-arginine ADP-ribosyltransferase Tre1, found in Serratia proteamaculans (strain 568).